The primary structure comprises 577 residues: Dihydroxy-acid dehydratase (577 aa).

The span at 1–10 shows a compositional bias: basic and acidic residues; the sequence is MLKRSFDKSK. The segment at 1–22 is disordered; that stretch reads MLKRSFDKSKLPSRHVTEGPSR. C56 contacts [2Fe-2S] cluster. Mg(2+) is bound at residue D88. C129 contributes to the [2Fe-2S] cluster binding site. Mg(2+)-binding residues include D130 and K131. K131 is subject to N6-carboxylysine. [2Fe-2S] cluster is bound at residue C201. Residue E453 participates in Mg(2+) binding. S479 acts as the Proton acceptor in catalysis.

It belongs to the IlvD/Edd family. In terms of assembly, homodimer. It depends on [2Fe-2S] cluster as a cofactor. Requires Mg(2+) as cofactor.

The enzyme catalyses (2R)-2,3-dihydroxy-3-methylbutanoate = 3-methyl-2-oxobutanoate + H2O. It catalyses the reaction (2R,3R)-2,3-dihydroxy-3-methylpentanoate = (S)-3-methyl-2-oxopentanoate + H2O. The protein operates within amino-acid biosynthesis; L-isoleucine biosynthesis; L-isoleucine from 2-oxobutanoate: step 3/4. It participates in amino-acid biosynthesis; L-valine biosynthesis; L-valine from pyruvate: step 3/4. In terms of biological role, functions in the biosynthesis of branched-chain amino acids. Catalyzes the dehydration of (2R,3R)-2,3-dihydroxy-3-methylpentanoate (2,3-dihydroxy-3-methylvalerate) into 2-oxo-3-methylpentanoate (2-oxo-3-methylvalerate) and of (2R)-2,3-dihydroxy-3-methylbutanoate (2,3-dihydroxyisovalerate) into 2-oxo-3-methylbutanoate (2-oxoisovalerate), the penultimate precursor to L-isoleucine and L-valine, respectively. In Dinoroseobacter shibae (strain DSM 16493 / NCIMB 14021 / DFL 12), this protein is Dihydroxy-acid dehydratase.